The chain runs to 121 residues: UPF0145 protein SAV_4658 (121 aa).

This sequence belongs to the UPF0145 family.

This Streptomyces avermitilis (strain ATCC 31267 / DSM 46492 / JCM 5070 / NBRC 14893 / NCIMB 12804 / NRRL 8165 / MA-4680) protein is UPF0145 protein SAV_4658.